The chain runs to 248 residues: Malonyl-[acyl-carrier protein] O-methyltransferase 2 (248 aa).

This sequence belongs to the methyltransferase superfamily.

It catalyses the reaction malonyl-[ACP] + S-adenosyl-L-methionine = malonyl-[ACP] methyl ester + S-adenosyl-L-homocysteine. It functions in the pathway cofactor biosynthesis; biotin biosynthesis. Converts the free carboxyl group of a malonyl-thioester to its methyl ester by transfer of a methyl group from S-adenosyl-L-methionine (SAM). It allows to synthesize pimeloyl-ACP via the fatty acid synthetic pathway. This is Malonyl-[acyl-carrier protein] O-methyltransferase 2 from Coxiella burnetii (strain RSA 493 / Nine Mile phase I).